A 598-amino-acid polypeptide reads, in one-letter code: Arginine--tRNA ligase (598 aa).

A 'HIGH' region motif is present at residues 139–149 (ANPTGPMHVGH).

Belongs to the class-I aminoacyl-tRNA synthetase family. In terms of assembly, monomer.

It localises to the cytoplasm. It catalyses the reaction tRNA(Arg) + L-arginine + ATP = L-arginyl-tRNA(Arg) + AMP + diphosphate. The polypeptide is Arginine--tRNA ligase (Bradyrhizobium sp. (strain BTAi1 / ATCC BAA-1182)).